The sequence spans 251 residues: Lactose phosphotransferase system repressor (251 aa).

An HTH deoR-type domain is found at 3–58 (KHERLDEIAKLVNKKGTIRTNEIVEGLNVSDMTVRRDLIELENKGILTKIHGGARS). The H-T-H motif DNA-binding region spans 20-39 (IRTNEIVEGLNVSDMTVRRD).

Repressor of the lactose catabolism operon. Galactose-6-phosphate is the inducer. In Staphylococcus aureus (strain N315), this protein is Lactose phosphotransferase system repressor (lacR).